A 448-amino-acid chain; its full sequence is Mitochondrial distribution and morphology protein 10 (448 aa).

It belongs to the MDM10 family. In terms of assembly, component of the ER-mitochondria encounter structure (ERMES) or MDM complex, composed of MMM1, MDM10, MDM12 and MDM34. Associates with the mitochondrial outer membrane sorting assembly machinery SAM(core) complex.

The protein localises to the mitochondrion outer membrane. Its function is as follows. Component of the ERMES/MDM complex, which serves as a molecular tether to connect the endoplasmic reticulum and mitochondria. Components of this complex are involved in the control of mitochondrial shape and protein biogenesis and may function in phospholipid exchange. MDM10 is involved in the late assembly steps of the general translocase of the mitochondrial outer membrane (TOM complex). Functions in the TOM40-specific route of the assembly of outer membrane beta-barrel proteins, including the association of TOM40 with the receptor TOM22 and small TOM proteins. Can associate with the SAM(core) complex as well as the MDM12-MMM1 complex, both involved in late steps of the major beta-barrel assembly pathway, that is responsible for biogenesis of all outer membrane beta-barrel proteins. May act as a switch that shuttles between both complexes and channels precursor proteins into the TOM40-specific pathway. Plays a role in mitochondrial morphology and in the inheritance of mitochondria. This Podospora anserina (strain S / ATCC MYA-4624 / DSM 980 / FGSC 10383) (Pleurage anserina) protein is Mitochondrial distribution and morphology protein 10.